We begin with the raw amino-acid sequence, 126 residues long: Large ribosomal subunit protein bL12 (126 aa).

Belongs to the bacterial ribosomal protein bL12 family. Homodimer. Part of the ribosomal stalk of the 50S ribosomal subunit. Forms a multimeric L10(L12)X complex, where L10 forms an elongated spine to which 2 to 4 L12 dimers bind in a sequential fashion. Binds GTP-bound translation factors.

Its function is as follows. Forms part of the ribosomal stalk which helps the ribosome interact with GTP-bound translation factors. Is thus essential for accurate translation. The sequence is that of Large ribosomal subunit protein bL12 from Beijerinckia indica subsp. indica (strain ATCC 9039 / DSM 1715 / NCIMB 8712).